Consider the following 178-residue polypeptide: UPF0302 protein BcerKBAB4_1445 (178 aa).

Belongs to the UPF0302 family.

This chain is UPF0302 protein BcerKBAB4_1445, found in Bacillus mycoides (strain KBAB4) (Bacillus weihenstephanensis).